We begin with the raw amino-acid sequence, 233 residues long: Glyceraldehyde-3-phosphate dehydrogenase A, chloroplastic (233 aa).

Residues 49-51, Thr-80, Arg-95, 108-109, and Arg-131 each bind D-glyceraldehyde 3-phosphate; these read SCT and TG. Cys-50 acts as the Nucleophile in catalysis. An NADP(+)-binding site is contributed by Asn-213.

It belongs to the glyceraldehyde-3-phosphate dehydrogenase family. In terms of assembly, tetramer of either four A chains (GAPDH 2) or two A and two B chains (GAPDH 1).

It localises to the plastid. The protein localises to the chloroplast. It carries out the reaction D-glyceraldehyde 3-phosphate + phosphate + NADP(+) = (2R)-3-phospho-glyceroyl phosphate + NADPH + H(+). It participates in carbohydrate biosynthesis; Calvin cycle. The protein is Glyceraldehyde-3-phosphate dehydrogenase A, chloroplastic (GAPA) of Sinapis alba (White mustard).